The chain runs to 164 residues: I-Kappa-B like protein F1 (164 aa).

ANK repeat units follow at residues 57–89, 94–124, and 128–157; these read HGRQCIHTVAWHDRANAVMKIEILMQSGVNINA, TGNTLLHIAASTGNYLLADWFCQQLGVDLGA, and QQETAYYIAYKMRDRKMMKLLRAHGVAYNN.

This sequence belongs to the polydnaviridae I-Kappa-B-like protein family.

Its function is as follows. Suppresses the host immune response through NF-kappa-B inactivation. Possesses ankyrin repeat domains required for NF-kappa-B binding but lacks the regulatory regions required for dissociation from NF-kappa-B and degradation. Therefore, prevents host NF-kappa-B release and subsequent activation. The protein is I-Kappa-B like protein F1 (F2) of Microplitis demolitor bracovirus (isolate Webb) (MdBV).